Here is a 113-residue protein sequence, read N- to C-terminus: UPF0102 protein Dgeo_1894 (113 aa).

This sequence belongs to the UPF0102 family.

In Deinococcus geothermalis (strain DSM 11300 / CIP 105573 / AG-3a), this protein is UPF0102 protein Dgeo_1894.